Here is an 88-residue protein sequence, read N- to C-terminus: Small ribosomal subunit protein bS16c (88 aa).

It belongs to the bacterial ribosomal protein bS16 family.

Its subcellular location is the plastid. It is found in the chloroplast. The chain is Small ribosomal subunit protein bS16c from Atropa belladonna (Belladonna).